A 263-amino-acid polypeptide reads, in one-letter code: 5'-nucleotidase SurE (263 aa).

Positions 15, 16, 46, and 102 each coordinate a divalent metal cation.

Belongs to the SurE nucleotidase family. It depends on a divalent metal cation as a cofactor.

It is found in the cytoplasm. It carries out the reaction a ribonucleoside 5'-phosphate + H2O = a ribonucleoside + phosphate. Its function is as follows. Nucleotidase that shows phosphatase activity on nucleoside 5'-monophosphates. The chain is 5'-nucleotidase SurE from Chlorobaculum tepidum (strain ATCC 49652 / DSM 12025 / NBRC 103806 / TLS) (Chlorobium tepidum).